An 89-amino-acid chain; its full sequence is UPF0213 protein HQ_3675A (89 aa).

Residues 3–78 (DYHYVYIVEC…KSYTREKKQQ (76 aa)) form the GIY-YIG domain.

Belongs to the UPF0213 family.

The sequence is that of UPF0213 protein HQ_3675A from Haloquadratum walsbyi (strain DSM 16790 / HBSQ001).